Reading from the N-terminus, the 1381-residue chain is MKAPAVLAPGILVLLFTLVQRSNGECKEALTKSEMNVNMKYQLPNFTAETPIQNVILHEHHIFLGATNYIYVLNEEDLQKVAEYRTGPVLEHPDCFPCQDCSSKANLSGGVWKDNINMALVVDTYYDDQLISCGSVNRGTCQRHVFPHNHTADIQSEVHCIFSAQTEEPSQCPDCMVSALGTKVLLSVKDRFLNFFVGNTINSSYFPDHSLHSISVRRLKETKDGFMFLTDQSYVDVLPEFRDSYPIKYVHAFESNNFIYFLTVQRETLNAQTFHTRIIRFCSINSALHSYMEMPLECILTEKRKKRSTKKEVFNILQAAYVSKPGAQLARQIGASLNDDILFGVFAQSKPDSAEPMDRSAVCAFPIKYVNDFFNKIVNKNNVRCLQHFYGPNHEHCFNRTFQRNLLGCEARHDEYRTEFTTALQRIDLFAGQFNKVLLTSISTFIKGDLTIANLGTSEGRFIQIVVSRSVPSNPHVNFLLDSHPVSPEVIVEHPLNQNGYTLVVTGKKITKIPLNGLGCRHFQSCSQCLSAPSFVQCGWCHDKCVRSEECSSGTWTQETCLPTIYKVFPTSAPLEGGTRLTICGWDFGFRRNNKFDLKKTRVLLGNESCTLTLSESTMNTLKCTVGPAMNERFNMSIIISNAHGTTQYSTFSYVDPIITSISPRYGPMSGGTLLTLTGNYLNSGNSRHISIGGKTCTLKSVSNSILECYTPAQSISTEFPVKLKIDLANRETSIFSYREDPIVYEIYPTKSFVSGGSTITGIGKNLNSVSVPRMVINLHEAKRNFTVACQHRSNSEIICCTTPSLQQLNLQLPLKTKAFFMLDGILSKYFDLIYVHNPVFKPFEKPVMISIGNENVLEIKGNDIDPEAVKGEVLKVGNKSCENIHLHSEAVLCTVPGDLLKLNSELNIEWKQAISSTVLGKVIVQPDQNFTGLVAGVVSISIALLLLLGLFLWLKKKKQIKDLGSELVRYDARVHTPHLDRLVSARSVSPTTEMVSNESVDYRATFPEDQFPNSSQNGSCRQVQYPLTDMSPILTSGDSDISSPLLQNTVHIDLSALNPELVQAVQHVVIGPSSLIVHFNEVIGRGHFGCVYHGTLLDNDGKKIHCAVKSLNRITDIGEVSQFLTEGIIMKDFSHPNVLSLLGICLRSEGSPLVVLPYMKHGDLRNFIRNETHNPTVKDLIGFGLQVAKGMKYLASKKFVHRDLAARNCMLDEKFTVKVADFGLARDMYDKEYYSVHNKTGAKLPVKWMALESLQTQKFTTKSDVWSFGVLLWELMTRGAPPYPDVNTFDITVYLLQGRRLLQPEYCPDPLYEVMLKCWHPKAEMRPSFSELVSRISAIFSTFIGEHYVHVNATYVNVKCVAPYPSLLSSQDNTDGEVDT.

Residues 1-24 (MKAPAVLAPGILVLLFTLVQRSNG) form the signal peptide. Topologically, residues 25 to 934 (ECKEALTKSE…VQPDQNFTGL (910 aa)) are extracellular. The Sema domain maps to 27–515 (KEALTKSEMN…TGKKITKIPL (489 aa)). N45 carries an N-linked (GlcNAc...) asparagine glycan. 4 disulfide bridges follow: C95-C101, C98-C160, C133-C141, and C172-C175. An N-linked (GlcNAc...) asparagine glycan is attached at N106. N-linked (GlcNAc...) asparagine glycosylation occurs at N149. N-linked (GlcNAc...) asparagine glycosylation occurs at N202. Cystine bridges form between C298-C363 and C385-C397. N-linked (GlcNAc...) asparagine glycosylation is present at N399. 4 cysteine pairs are disulfide-bonded: C520–C538, C526–C561, C529–C545, and C541–C551. IPT/TIG domains lie at 563–655 (PTIY…FSYV), 657–739 (PIIT…FSYR), and 742–836 (PIVY…LIYV). The O-linked (Man) threonine glycan is linked to T582. Residues N607 and N635 are each glycosylated (N-linked (GlcNAc...) asparagine). O-linked (Man) threonine glycans are attached at residues T676 and T761. N-linked (GlcNAc...) asparagine glycans are attached at residues N785, N879, and N930. The helical transmembrane segment at 935–955 (VAGVVSISIALLLLLGLFLWL) threads the bilayer. The Cytoplasmic segment spans residues 956–1381 (KKKKQIKDLG…QDNTDGEVDT (426 aa)). S966 bears the Phosphoserine mark. Phosphothreonine is present on T977. A phosphoserine mark is found at S990, S997, and S1000. Residue Y1003 is modified to Phosphotyrosine. The region spanning 1078 to 1345 (VHFNEVIGRG…RISAIFSTFI (268 aa)) is the Protein kinase domain. Residues 1084–1092 (IGRGHFGCV) and K1110 each bind ATP. D1204 (proton acceptor) is an active-site residue. The tract at residues 1212-1381 (LDEKFTVKVA…QDNTDGEVDT (170 aa)) is interaction with RANBP9. Y1230 is subject to Phosphotyrosine. Phosphotyrosine; by autocatalysis occurs at positions 1234 and 1235. T1289 is subject to Phosphothreonine. The segment at 1320–1359 (WHPKAEMRPSFSELVSRISAIFSTFIGEHYVHVNATYVNV) is interaction with MUC20. 2 positions are modified to phosphotyrosine; by autocatalysis: Y1349 and Y1356. Residue Y1365 is modified to Phosphotyrosine.

It belongs to the protein kinase superfamily. Tyr protein kinase family. Heterodimer made of an alpha chain (50 kDa) and a beta chain (145 kDa) which are disulfide linked. Binds PLXNB1. Interacts when phosphorylated with downstream effectors including STAT3, PIK3R1, SRC, PCLG1, GRB2 and GAB1. Interacts with SPSB1, SPSB2 and SPSB4. Interacts with INPP5D/SHIP1. When phosphorylated at Tyr-1356, interacts with INPPL1/SHIP2. Interacts with RANBP9 and RANBP10, as well as SPSB1, SPSB2, SPSB3 and SPSB4. SPSB1 binding occurs in the presence and in the absence of HGF, however HGF treatment has a positive effect on this interaction. Interacts with MUC20; prevents interaction with GRB2 and suppresses hepatocyte growth factor-induced cell proliferation. Interacts with GRB10. Interacts with PTPN1 and PTPN2. Interacts with HSP90AA1 and HSP90AB1; the interaction suppresses MET kinase activity. Interacts with tensin TNS3. Interacts (when phosphorylated) with tensin TNS4 (via SH2 domain); the interaction increases MET protein stability by inhibiting MET endocytosis and subsequent lysosomal degradation. Post-translationally, autophosphorylated in response to ligand binding on Tyr-1234 and Tyr-1235 in the kinase domain leading to further phosphorylation of Tyr-1349 and Tyr-1356 in the C-terminal multifunctional docking site. Dephosphorylated by PTPRJ at Tyr-1349 and Tyr-1365. Dephosphorylated by PTPN1 and PTPN2. In terms of processing, ubiquitinated. Ubiquitination by CBL regulates the receptor stability and activity through proteasomal degradation. O-mannosylation of IPT/TIG domains by TMEM260 is required for protein maturation. O-mannosylated residues are composed of single mannose glycans that are not elongated or modified.

Its subcellular location is the membrane. It catalyses the reaction L-tyrosyl-[protein] + ATP = O-phospho-L-tyrosyl-[protein] + ADP + H(+). In terms of biological role, receptor tyrosine kinase that transduces signals from the extracellular matrix into the cytoplasm by binding to hepatocyte growth factor/HGF ligand. Regulates many physiological processes including proliferation, scattering, morphogenesis and survival. Ligand binding at the cell surface induces autophosphorylation of MET on its intracellular domain that provides docking sites for downstream signaling molecules. Following activation by ligand, interacts with the PI3-kinase subunit PIK3R1, PLCG1, SRC, GRB2, STAT3 or the adapter GAB1. Recruitment of these downstream effectors by MET leads to the activation of several signaling cascades including the RAS-ERK, PI3 kinase-AKT, or PLCgamma-PKC. The RAS-ERK activation is associated with the morphogenetic effects while PI3K/AKT coordinates prosurvival effects. During embryonic development, MET signaling plays a role in gastrulation, development and migration of muscles and neuronal precursors, angiogenesis and kidney formation. In adults, participates in wound healing as well as organ regeneration and tissue remodeling. Also promotes differentiation and proliferation of hematopoietic cells. The sequence is that of Hepatocyte growth factor receptor (MET) from Callithrix jacchus (White-tufted-ear marmoset).